The chain runs to 161 residues: Nucleotide-binding protein LHK_01423 (161 aa).

This sequence belongs to the YajQ family.

Functionally, nucleotide-binding protein. This Laribacter hongkongensis (strain HLHK9) protein is Nucleotide-binding protein LHK_01423.